A 428-amino-acid polypeptide reads, in one-letter code: MKTSLFKSLYFQVLTAIAIGILLGHFYPEIGEQMKPLGDGFVKLIKMIIAPVIFCTVVTGIAGMESMKAVGRTGAVALLYFEIVSTIALIIGLIIVNVVQPGAGMNVDPATLDAKAVAVYADQAKDQGIVAFIMDVIPASVIGAFASGNILQVLLFAVLFGFALHRLGSKGQLIFNVIESFSQVIFGIINMIMRLAPIGALGAMAFTIGKYGVGTLVQLGQLIICFYITCILFVVLVLGSIAKATGFSIFKFIRYIREELLIVLGTSSSESALPRMLDKMEKLGCRKSVVGLVIPTGYSFNLDGTSIYLTMAAVFIAQATNSQMDIVHQITLLIVLLLSSKGAAGVTGSGFIVLAATLSAVGHLPVAGLALILGIDRFMSEARALTNLVGNGVATIVVAKWVKELDHKKLDDVLNNRAPDGKTHELSS.

8 helical membrane-spanning segments follow: residues 8–28 (SLYFQVLTAIAIGILLGHFYP), 44–64 (LIKMIIAPVIFCTVVTGIAGM), 76–96 (VALLYFEIVSTIALIIGLIIV), 142–162 (IGAFASGNILQVLLFAVLFGF), 184–206 (VIFGIINMIMRLAPIGALGAMAF), 222–242 (LIICFYITCILFVVLVLGSIA), 326–346 (IVHQITLLIVLLLSSKGAAGV), and 352–372 (IVLAATLSAVGHLPVAGLALI).

The protein belongs to the dicarboxylate/amino acid:cation symporter (DAACS) (TC 2.A.23) family.

The protein resides in the cell inner membrane. Functionally, responsible for the transport of dicarboxylates such as succinate, fumarate, and malate from the periplasm across the membrane. The polypeptide is C4-dicarboxylate transport protein (Shigella flexneri).